The following is a 205-amino-acid chain: RPW8-like protein 2 (205 aa).

Positions 1 to 153 constitute an RPW8 domain; that stretch reads MPLTEIIAGA…IMGQPIDCII (153 aa). The helical transmembrane segment at 7–23 threads the bilayer; that stretch reads IAGAALGLALQILHEAI. 2 coiled-coil regions span residues 70–92 and 125–147; these read EDLKHLLEKAVVLVEAYAELKRR and ADIKDLMAKMSEMNTKLEKIMGQ.

This sequence belongs to the plant RPW8 protein family.

It is found in the membrane. Its function is as follows. Probable disease resistance (R) protein. The sequence is that of RPW8-like protein 2 from Arabidopsis thaliana (Mouse-ear cress).